The sequence spans 327 residues: Methionyl-tRNA formyltransferase (327 aa).

118–121 serves as a coordination point for (6S)-5,6,7,8-tetrahydrofolate; that stretch reads SLLP.

It belongs to the Fmt family.

It carries out the reaction L-methionyl-tRNA(fMet) + (6R)-10-formyltetrahydrofolate = N-formyl-L-methionyl-tRNA(fMet) + (6S)-5,6,7,8-tetrahydrofolate + H(+). Its function is as follows. Attaches a formyl group to the free amino group of methionyl-tRNA(fMet). The formyl group appears to play a dual role in the initiator identity of N-formylmethionyl-tRNA by promoting its recognition by IF2 and preventing the misappropriation of this tRNA by the elongation apparatus. The sequence is that of Methionyl-tRNA formyltransferase from Corynebacterium jeikeium (strain K411).